A 118-amino-acid chain; its full sequence is Thioredoxin H3 (118 aa).

An N-acetylalanine modification is found at Ala-2. The Thioredoxin domain occupies 2 to 113 (AAEGEVIACH…IIANLEKHKT (112 aa)). Active-site nucleophile residues include Cys-39 and Cys-42. Cys-39 and Cys-42 are disulfide-bonded.

This sequence belongs to the thioredoxin family. Plant H-type subfamily. Interacts with FBA5 and FBA8. Interacts with FBA6. Interacts with MDH1.

The protein localises to the cytoplasm. Thiol-disulfide oxidoreductase that possesses disulfide reductase and insulin disulfide bonds reducing activities. Heat shock causes oligomerization and formation of high molecular weight (HMW) complexes with concomitant functional switching from a disulfide reductase to chaperone. In Arabidopsis thaliana (Mouse-ear cress), this protein is Thioredoxin H3 (TRX3).